The sequence spans 115 residues: MLDIIKQIESQYIRTDLPNFNIGDTVKVHVRIKEGNRQRVQVFEGIVLKRQNGGVRETFTVRRVAYGVGVERTFPVNAPIIEKIQVVRRGKVRRAKLYYLRDRVGKAAKVKEILK.

Belongs to the bacterial ribosomal protein bL19 family.

Its function is as follows. This protein is located at the 30S-50S ribosomal subunit interface and may play a role in the structure and function of the aminoacyl-tRNA binding site. The chain is Large ribosomal subunit protein bL19 from Clostridium kluyveri (strain ATCC 8527 / DSM 555 / NBRC 12016 / NCIMB 10680 / K1).